The following is a 198-amino-acid chain: 3-isopropylmalate dehydratase small subunit (198 aa).

This sequence belongs to the LeuD family. LeuD type 1 subfamily. In terms of assembly, heterodimer of LeuC and LeuD.

It carries out the reaction (2R,3S)-3-isopropylmalate = (2S)-2-isopropylmalate. The protein operates within amino-acid biosynthesis; L-leucine biosynthesis; L-leucine from 3-methyl-2-oxobutanoate: step 2/4. In terms of biological role, catalyzes the isomerization between 2-isopropylmalate and 3-isopropylmalate, via the formation of 2-isopropylmaleate. The sequence is that of 3-isopropylmalate dehydratase small subunit (leuD) from Mycobacterium bovis (strain ATCC BAA-935 / AF2122/97).